The chain runs to 299 residues: tRNA dimethylallyltransferase (299 aa).

ATP is bound at residue 10–17 (GPTASGKS). 12-17 (TASGKS) is a substrate binding site.

Belongs to the IPP transferase family. As to quaternary structure, monomer. The cofactor is Mg(2+).

The enzyme catalyses adenosine(37) in tRNA + dimethylallyl diphosphate = N(6)-dimethylallyladenosine(37) in tRNA + diphosphate. In terms of biological role, catalyzes the transfer of a dimethylallyl group onto the adenine at position 37 in tRNAs that read codons beginning with uridine, leading to the formation of N6-(dimethylallyl)adenosine (i(6)A). The chain is tRNA dimethylallyltransferase from Malacoplasma penetrans (strain HF-2) (Mycoplasma penetrans).